A 268-amino-acid polypeptide reads, in one-letter code: 2,5-diamino-6-ribosylamino-4(3H)-pyrimidinone 5'-phosphate reductase (268 aa).

NADP(+) contacts are provided by residues Thr68, Asp72, 103 to 106 (SNLR), and 191 to 195 (GAELL).

The protein belongs to the HTP reductase family. As to quaternary structure, homodimer.

It catalyses the reaction 2,5-diamino-6-(1-D-ribitylamino)pyrimidin-4(3H)-one 5'-phosphate + NADP(+) = 2,5-diamino-6-(1-D-ribosylamino)pyrimidin-4(3H)-one 5'-phosphate + NADPH + H(+). The enzyme catalyses 2,5-diamino-6-(1-D-ribitylamino)pyrimidin-4(3H)-one 5'-phosphate + NAD(+) = 2,5-diamino-6-(1-D-ribosylamino)pyrimidin-4(3H)-one 5'-phosphate + NADH + H(+). It participates in cofactor biosynthesis; riboflavin biosynthesis. Catalyzes an early step in riboflavin biosynthesis, the NADPH-dependent reduction of the ribose side chain of 2,5-diamino-6-ribosylamino-4(3H)-pyrimidinone 5'-phosphate, yielding 2,5-diamino-6-ribitylamino-4(3H)-pyrimidinone 5'-phosphate. This is 2,5-diamino-6-ribosylamino-4(3H)-pyrimidinone 5'-phosphate reductase from Schizosaccharomyces pombe (strain 972 / ATCC 24843) (Fission yeast).